Reading from the N-terminus, the 336-residue chain is tRNA-splicing endonuclease (336 aa).

Catalysis depends on residues Tyr-271, His-282, and Lys-313.

It belongs to the tRNA-intron endonuclease family. Archaeal long subfamily. Homodimer.

The enzyme catalyses pretRNA = a 3'-half-tRNA molecule with a 5'-OH end + a 5'-half-tRNA molecule with a 2',3'-cyclic phosphate end + an intron with a 2',3'-cyclic phosphate and a 5'-hydroxyl terminus.. Its function is as follows. Endonuclease that removes tRNA introns. Cleaves pre-tRNA at the 5'- and 3'-splice sites to release the intron. The products are an intron and two tRNA half-molecules bearing 2',3' cyclic phosphate and 5'-OH termini. Recognizes a pseudosymmetric substrate in which 2 bulged loops of 3 bases are separated by a stem of 4 bp. This Natronomonas pharaonis (strain ATCC 35678 / DSM 2160 / CIP 103997 / JCM 8858 / NBRC 14720 / NCIMB 2260 / Gabara) (Halobacterium pharaonis) protein is tRNA-splicing endonuclease.